Consider the following 355-residue polypeptide: Protein RecA (355 aa).

An ATP-binding site is contributed by 72 to 79 (GPESSGKT).

It belongs to the RecA family.

It localises to the cytoplasm. In terms of biological role, can catalyze the hydrolysis of ATP in the presence of single-stranded DNA, the ATP-dependent uptake of single-stranded DNA by duplex DNA, and the ATP-dependent hybridization of homologous single-stranded DNAs. It interacts with LexA causing its activation and leading to its autocatalytic cleavage. The chain is Protein RecA from Wolbachia sp. subsp. Drosophila simulans (strain wRi).